Here is a 371-residue protein sequence, read N- to C-terminus: UDP-N-acetylglucosamine--N-acetylmuramyl-(pentapeptide) pyrophosphoryl-undecaprenol N-acetylglucosamine transferase (371 aa).

Residues 10-12 (TGG), asparagine 124, arginine 165, serine 191, isoleucine 246, and glutamine 291 contribute to the UDP-N-acetyl-alpha-D-glucosamine site.

Belongs to the glycosyltransferase 28 family. MurG subfamily.

It is found in the cell inner membrane. It catalyses the reaction di-trans,octa-cis-undecaprenyl diphospho-N-acetyl-alpha-D-muramoyl-L-alanyl-D-glutamyl-meso-2,6-diaminopimeloyl-D-alanyl-D-alanine + UDP-N-acetyl-alpha-D-glucosamine = di-trans,octa-cis-undecaprenyl diphospho-[N-acetyl-alpha-D-glucosaminyl-(1-&gt;4)]-N-acetyl-alpha-D-muramoyl-L-alanyl-D-glutamyl-meso-2,6-diaminopimeloyl-D-alanyl-D-alanine + UDP + H(+). It functions in the pathway cell wall biogenesis; peptidoglycan biosynthesis. Functionally, cell wall formation. Catalyzes the transfer of a GlcNAc subunit on undecaprenyl-pyrophosphoryl-MurNAc-pentapeptide (lipid intermediate I) to form undecaprenyl-pyrophosphoryl-MurNAc-(pentapeptide)GlcNAc (lipid intermediate II). The chain is UDP-N-acetylglucosamine--N-acetylmuramyl-(pentapeptide) pyrophosphoryl-undecaprenol N-acetylglucosamine transferase from Geobacter sp. (strain M21).